Here is a 407-residue protein sequence, read N- to C-terminus: Imidazolonepropionase (407 aa).

Residues His-74 and His-76 each coordinate Fe(3+). Positions 74 and 76 each coordinate Zn(2+). 4-imidazolone-5-propanoate-binding residues include Arg-83, Tyr-146, and His-179. Tyr-146 serves as a coordination point for N-formimidoyl-L-glutamate. Fe(3+) is bound at residue His-244. A Zn(2+)-binding site is contributed by His-244. Gln-247 provides a ligand contact to 4-imidazolone-5-propanoate. Asp-319 serves as a coordination point for Fe(3+). Asp-319 provides a ligand contact to Zn(2+). Positions 321 and 323 each coordinate N-formimidoyl-L-glutamate. Residue Thr-324 coordinates 4-imidazolone-5-propanoate.

The protein belongs to the metallo-dependent hydrolases superfamily. HutI family. Requires Zn(2+) as cofactor. The cofactor is Fe(3+).

It localises to the cytoplasm. It catalyses the reaction 4-imidazolone-5-propanoate + H2O = N-formimidoyl-L-glutamate. Its pathway is amino-acid degradation; L-histidine degradation into L-glutamate; N-formimidoyl-L-glutamate from L-histidine: step 3/3. Catalyzes the hydrolytic cleavage of the carbon-nitrogen bond in imidazolone-5-propanoate to yield N-formimidoyl-L-glutamate. It is the third step in the universal histidine degradation pathway. The protein is Imidazolonepropionase of Salmonella schwarzengrund (strain CVM19633).